The sequence spans 560 residues: MGWKYLLSDIEIAQQCKMKKITEIAASLDITPDELELYGSYKAKLADSLEKRLADKPNGKLILVTAINPTPAGEGKTTTTVGLGQAMPKIGKKAVIALREPSLGPVFGVKGGAAGGGYSQVVPMEDINLHFTGDFHAITSANNLLCAMIDNHIQQGNALDIDTRRIIFKRCLDMNDRALRNIIIGLGGQTNGVPREDHFMITVASEVMAILCLANDIDDLKERLGNVIFGYSRKGTPLYARDLKAVGAMAALLKDAIKPNLVQTLENTPCFIHGGPFANIAHGCNSVRATKLSLKMADYVITEAGFGSDLGAEKFFDIKCRYAGLTPNTVVLVATVRALKYNGGVKKEDTTIPNVAALKAGMVNLEAHIQNLQTFGVPVVVAINRFSTDTDEELAVLKEFCTAQGAEFAISEVFAKGGEGGVELAKKVVASCEKPQKFQCLYELNTPIKEKINALATRIYGADGVVYSPAADAAIKDIDALGRSNLPICMAKTQYSLSDDPNKLGRPKNFVINAATVRLCNGAGFIVVETGDIMTLPGLPAVPAACSIDVNNDGYISGLF.

70–77 is an ATP binding site; the sequence is TPAGEGKT.

Belongs to the formate--tetrahydrofolate ligase family.

It carries out the reaction (6S)-5,6,7,8-tetrahydrofolate + formate + ATP = (6R)-10-formyltetrahydrofolate + ADP + phosphate. It participates in one-carbon metabolism; tetrahydrofolate interconversion. This Methanocorpusculum labreanum (strain ATCC 43576 / DSM 4855 / Z) protein is Formate--tetrahydrofolate ligase.